The sequence spans 67 residues: Lantibiotic Flvbeta.b (67 aa).

The propeptide at 1–34 is cleaved by FlvT; it reads MDNNTKLQKLYEQLAATGSEKELDAMLDENMAGA. Ser-36 carries the 2,3-didehydroalanine (Ser); by FlvM2 modification. Residues Thr-39 and Thr-43 each carry the 2,3-didehydrobutyrine; by FlvM2 modification. Cross-links (beta-methyllanthionine (Thr-Cys); by FlvM2) lie at residues 50–56, 58–61, and 62–65; these read TTGFDWC, TGAC, and TYSC.

Contains DL-beta-methyllanthionine, when coepressed in E.coli with the flavecin synthetase FlvM2.

It localises to the secreted. Functionally, lanthionine-containing peptide antibiotic (lantibiotic) only active on Gram-positive bacteria in synergy with Flvalpha.a. Is not active in absence of Flvalpha.a, which is encoded by the same operon than Flvbeta.b. The bactericidal activity of lantibiotics is based on depolarization of energized bacterial cytoplasmic membranes, initiated by the formation of aqueous transmembrane pores. In Ruminococcus flavefaciens, this protein is Lantibiotic Flvbeta.b.